A 241-amino-acid polypeptide reads, in one-letter code: Pyridoxine 5'-phosphate synthase (241 aa).

Position 7 (N7) interacts with 3-amino-2-oxopropyl phosphate. 9-10 (DH) lines the 1-deoxy-D-xylulose 5-phosphate pocket. A 3-amino-2-oxopropyl phosphate-binding site is contributed by R18. H43 acts as the Proton acceptor in catalysis. 1-deoxy-D-xylulose 5-phosphate contacts are provided by R45 and H50. The Proton acceptor role is filled by E70. Residue T100 participates in 1-deoxy-D-xylulose 5-phosphate binding. H191 functions as the Proton donor in the catalytic mechanism. 3-amino-2-oxopropyl phosphate is bound by residues G192 and 213 to 214 (GH).

It belongs to the PNP synthase family. As to quaternary structure, homooctamer; tetramer of dimers.

The protein localises to the cytoplasm. The enzyme catalyses 3-amino-2-oxopropyl phosphate + 1-deoxy-D-xylulose 5-phosphate = pyridoxine 5'-phosphate + phosphate + 2 H2O + H(+). It functions in the pathway cofactor biosynthesis; pyridoxine 5'-phosphate biosynthesis; pyridoxine 5'-phosphate from D-erythrose 4-phosphate: step 5/5. Catalyzes the complicated ring closure reaction between the two acyclic compounds 1-deoxy-D-xylulose-5-phosphate (DXP) and 3-amino-2-oxopropyl phosphate (1-amino-acetone-3-phosphate or AAP) to form pyridoxine 5'-phosphate (PNP) and inorganic phosphate. This is Pyridoxine 5'-phosphate synthase from Nitratidesulfovibrio vulgaris (strain ATCC 29579 / DSM 644 / CCUG 34227 / NCIMB 8303 / VKM B-1760 / Hildenborough) (Desulfovibrio vulgaris).